The following is a 137-amino-acid chain: Large ribosomal subunit protein uL16 (137 aa).

It belongs to the universal ribosomal protein uL16 family. Part of the 50S ribosomal subunit.

Functionally, binds 23S rRNA and is also seen to make contacts with the A and possibly P site tRNAs. The polypeptide is Large ribosomal subunit protein uL16 (Streptococcus uberis (strain ATCC BAA-854 / 0140J)).